A 66-amino-acid chain; its full sequence is Large ribosomal subunit protein bL31 (66 aa).

4 residues coordinate Zn(2+): Cys-16, Cys-18, Cys-36, and Cys-39.

Belongs to the bacterial ribosomal protein bL31 family. Type A subfamily. As to quaternary structure, part of the 50S ribosomal subunit. Requires Zn(2+) as cofactor.

Functionally, binds the 23S rRNA. The sequence is that of Large ribosomal subunit protein bL31 from Anoxybacillus flavithermus (strain DSM 21510 / WK1).